The sequence spans 375 residues: Alcohol dehydrogenase 1 (375 aa).

Ser2 is modified (N-acetylserine). Residues Cys47, His68, Cys98, Cys101, Cys104, Cys112, and Cys175 each contribute to the Zn(2+) site. Residues 200–205 (GLGGVG), Asp224, and Lys229 each bind NAD(+). Lys234 carries the N6-succinyllysine modification. Position 293-295 (293-295 (VGV)) interacts with NAD(+). At Lys340 the chain carries N6-succinyllysine. Position 370 (Arg370) interacts with NAD(+).

It belongs to the zinc-containing alcohol dehydrogenase family. Class-I subfamily. Dimer of identical or non-identical chains of three types (A, B, C), which are coded by 3 separate genes at different loci. Zn(2+) serves as cofactor. As to expression, expressed at high levels in the liver, small intestine and eye, at moderate levels in kidney, ovary and uterus, and at low levels in the spinal cord, thymus, heart, stomach mucosa, skin and testis.

It localises to the cytoplasm. It catalyses the reaction a primary alcohol + NAD(+) = an aldehyde + NADH + H(+). The enzyme catalyses a secondary alcohol + NAD(+) = a ketone + NADH + H(+). In Mus musculus (Mouse), this protein is Alcohol dehydrogenase 1 (Adh1).